Here is an 837-residue protein sequence, read N- to C-terminus: MGELFRSEEMTLAQLFLQSEAAYCCVSELGELGKVQFRDLNPDVNVFQRKFVNEVRRCEEMDRKLRFVEKEIRKANIPIMDTGENPEVPFPRDMIDLEANFEKIENELKEINTNQEALKRNFLELTELKFILRKTQQFFDEMADPDLLEESSSLLEPSEMGRGTPLRLGFVAGVINRERIPTFERMLWRVCRGNVFLRQAEIENPLEDPVTGDYVHKSVFIIFFQGDQLKNRVKKICEGFRASLYPCPETPQERKEMASGVNTRIDDLQMVLNQTEDHRQRVLQAAAKNIRVWFIKVRKMKAIYHTLNLCNIDVTQKCLIAEVWCPVTDLDSIQFALRRGTEHSGSTVPSILNRMQTNQTPPTYNKTNKFTYGFQNIVDAYGIGTYREINPAPYTIITFPFLFAVMFGDFGHGILMTLFAVWMVLRESRILSQKNENEMFSTVFSGRYIILLMGVFSMYTGLIYNDCFSKSLNIFGSSWSVRPMFTYNWTEETLRGNPVLQLNPALPGVFGGPYPFGIDPIWNIATNKLTFLNSFKMKMSVILGIIHMLFGVSLSLFNHIYFKKPLNIYFGFIPEIIFMTSLFGYLVILIFYKWTAYDAHTSENAPSLLIHFINMFLFSYPESGYSMLYSGQKGIQCFLVVVALLCVPWMLLFKPLVLRRQYLRRKHLGTLNFGGIRVGNGPTEEDAEIIQHDQLSTHSEDADEPSEDEVFDFGDTMVHQAIHTIEYCLGCISNTASYLRLWALSLAHAQLSEVLWTMVIHIGLSVKSLAGGLVLFFFFTAFATLTVAILLIMEGLSAFLHALRLHWVEFQNKFYSGTGFKFLPFSFEHIREGKFEE.

Over 1–388 (MGELFRSEEM…DAYGIGTYRE (388 aa)) the chain is Cytoplasmic. Residues threonine 250 and threonine 360 each carry the phosphothreonine modification. Tyrosine 364 is modified (phosphotyrosine). The chain crosses the membrane as a helical span at residues 389-407 (INPAPYTIITFPFLFAVMF). Residues 408 to 409 (GD) lie on the Vacuolar side of the membrane. The helical transmembrane segment at 410–426 (FGHGILMTLFAVWMVLR) threads the bilayer. At 427–441 (ESRILSQKNENEMFS) the chain is on the cytoplasmic side. A helical transmembrane segment spans residues 442-471 (TVFSGRYIILLMGVFSMYTGLIYNDCFSKS). Topologically, residues 472–534 (LNIFGSSWSV…ATNKLTFLNS (63 aa)) are vacuolar. The N-linked (GalNAc...) asparagine glycan is linked to asparagine 488. A helical membrane pass occupies residues 535–554 (FKMKMSVILGIIHMLFGVSL). Topologically, residues 555–572 (SLFNHIYFKKPLNIYFGF) are cytoplasmic. The chain crosses the membrane as a helical span at residues 573–593 (IPEIIFMTSLFGYLVILIFYK). Topologically, residues 594–638 (WTAYDAHTSENAPSLLIHFINMFLFSYPESGYSMLYSGQKGIQCF) are vacuolar. A helical membrane pass occupies residues 639–658 (LVVVALLCVPWMLLFKPLVL). Topologically, residues 659-724 (RRQYLRRKHL…DTMVHQAIHT (66 aa)) are cytoplasmic. Residues 725–749 (IEYCLGCISNTASYLRLWALSLAHA) form a helical membrane-spanning segment. The Vacuolar segment spans residues 750 to 770 (QLSEVLWTMVIHIGLSVKSLA). A helical transmembrane segment spans residues 771-809 (GGLVLFFFFTAFATLTVAILLIMEGLSAFLHALRLHWVE). Topologically, residues 810 to 837 (FQNKFYSGTGFKFLPFSFEHIREGKFEE) are cytoplasmic.

Belongs to the V-ATPase 116 kDa subunit family. As to quaternary structure, V-ATPase is a heteromultimeric enzyme made up of two complexes: the ATP-hydrolytic V1 complex and the proton translocation V0 complex. The V1 complex consists of three catalytic AB heterodimers that form a heterohexamer, three peripheral stalks each consisting of EG heterodimers, one central rotor including subunits D and F, and the regulatory subunits C and H. The proton translocation complex V0 consists of the proton transport subunit a, a ring of proteolipid subunits c9c'', rotary subunit d, subunits e and f, and the accessory subunits ATP6AP1/Ac45 and ATP6AP2/PRR. Interacts with SPAAR.

The protein resides in the cytoplasmic vesicle. The protein localises to the clathrin-coated vesicle membrane. It localises to the secretory vesicle. Its subcellular location is the synaptic vesicle membrane. It is found in the melanosome. Subunit of the V0 complex of vacuolar(H+)-ATPase (V-ATPase), a multisubunit enzyme composed of a peripheral complex (V1) that hydrolyzes ATP and a membrane integral complex (V0) that transports protons across cellular membranes. V-ATPase is responsible for the acidification of various organelles, such as lysosomes, endosomes, the trans-Golgi network, and secretory granules, including synaptic vesicles. In certain cell types, can be exported to the plasma membrane, where it is involved in the acidification of the extracellular environment. Required for assembly and activity of the vacuolar ATPase. Through its action on compartment acidification, plays an essential role in neuronal development in terms of integrity and connectivity of neurons. The chain is V-type proton ATPase 116 kDa subunit a 1 (ATP6V0A1) from Homo sapiens (Human).